Here is a 308-residue protein sequence, read N- to C-terminus: Ribosomal RNA small subunit methyltransferase H (308 aa).

S-adenosyl-L-methionine contacts are provided by residues 32-34, Asp-51, Phe-78, Asp-99, and Gln-106; that span reads GGH.

This sequence belongs to the methyltransferase superfamily. RsmH family.

The protein resides in the cytoplasm. It catalyses the reaction cytidine(1402) in 16S rRNA + S-adenosyl-L-methionine = N(4)-methylcytidine(1402) in 16S rRNA + S-adenosyl-L-homocysteine + H(+). Functionally, specifically methylates the N4 position of cytidine in position 1402 (C1402) of 16S rRNA. The sequence is that of Ribosomal RNA small subunit methyltransferase H from Campylobacter curvus (strain 525.92).